Reading from the N-terminus, the 157-residue chain is Arginine regulator (157 aa).

The protein belongs to the ArgR family.

The protein localises to the cytoplasm. Its pathway is amino-acid degradation; L-arginine degradation via ADI pathway. Functionally, regulates the transcription of the arc operon, involved in arginine catabolism. The protein is Arginine regulator (argR1) of Streptococcus pyogenes serotype M3 (strain ATCC BAA-595 / MGAS315).